Consider the following 229-residue polypeptide: Echinolectin 1 (229 aa).

Residue asparagine 94 is glycosylated (N-linked (GlcNAc...) asparagine).

The protein localises to the secreted. The chain is Echinolectin 1 from Echinometra lucunter (Rock-boring urchin).